We begin with the raw amino-acid sequence, 375 residues long: MKEFAYSEPCLDKEDKKAVLEVLNSKQLTQGKRSLLFEEALCEFLGVKHALVFNSATSALLTLYRNFSEFSADRNEIITTPISFVATANMLLESGYTPVFAGIKNDGNIDELALEKLINERTKAIVSVDYAGKSVEVESVQKLCKKHSLSFLSDSSHALGSEYQNKKVGGFALASVFSFHAIKPITTAEGGAVVTNDSELHEKMKLFRSHGMLKKDFFEGEVKSIGHNFRLNEIQSALGLSQLKKAPFLMQKREEAALTYDRIFKDNPYFTPLHPLLKDKSSNHLYPILMHQKFFTCKKLILESLHKRGILAQVHYKPIYQYQLYQQLFNTAPLKSAEDFYHAEISLPCHANLNLESVQNIAHSVLKTFESFKIE.

Substrate-binding positions include tyrosine 6, 26–29, alanine 56, and serine 178; that span reads KQLT. Residue lysine 183 is modified to N6-(pyridoxal phosphate)lysine. Substrate contacts are provided by residues asparagine 228 and 313-316; that span reads QVHY.

This sequence belongs to the DegT/DnrJ/EryC1 family.

The catalysed reaction is UDP-4-amino-4,6-dideoxy-N-acetyl-beta-L-altrosamine + 2-oxoglutarate = UDP-2-acetamido-2,6-dideoxy-beta-L-arabino-hex-4-ulose + L-glutamate. Its function is as follows. Catalyzes the second step in the biosynthesis of pseudaminic acid, a sialic-acid-like sugar that is used to modify flagellin. Uses UDP-2-acetamido-2,6-dideoxy-beta-L-arabino-4-hexulose as substrate producing UDP-4-amino-4,6-dideoxy-beta-L-AltNAc. In Helicobacter pylori (strain ATCC 700392 / 26695) (Campylobacter pylori), this protein is UDP-4-amino-4,6-dideoxy-N-acetyl-beta-L-altrosamine transaminase (pseC).